The sequence spans 612 residues: Kelch-like protein 40a (612 aa).

Positions 34–101 (VDCILKIKDK…IYTSDINLTE (68 aa)) constitute a BTB domain. Residues 136 to 238 (CLAIFRLGLL…PTSYFKEKVE (103 aa)) enclose the BACK domain. The span at 266-275 (RVKRSSHRKE) shows a compositional bias: basic residues. Residues 266-290 (RVKRSSHRKEGKSAEFESDDDDEDG) form a disordered region. Positions 281 to 290 (FESDDDDEDG) are enriched in acidic residues. Kelch repeat units lie at residues 350–402 (QIFV…EAEN), 403–452 (SIYV…SHKG), 453–500 (LVYV…VHKN), 502–547 (IYVV…ELGG), and 549–604 (LYAI…GVRL).

The protein belongs to the KLHL40 family. Component of the BCR(KLHL40) E3 ubiquitin ligase complex. As to expression, expressed in skeletal muscle and heart. Detected, although at much lower levels, in brain, eye and fin.

Its subcellular location is the cytoplasm. It is found in the myofibril. The protein resides in the sarcomere. The protein localises to the a band. It localises to the i band. Its function is as follows. Substrate-specific adapter of a BCR (BTB-CUL3-RBX1) E3 ubiquitin ligase complex. Required for skeletal muscle development. In Danio rerio (Zebrafish), this protein is Kelch-like protein 40a (klhl40a).